Consider the following 548-residue polypeptide: MDIYVVGPFGHAMDLLPNPTRPFSGRLHELSALALQRPQLVITTLGALLLAAFYLLPSKDPYNLKRIPMVSRSRVLDAYRSGVWWRFILPRFYPYIHEGYLKYSTKDRPFRVWLAQFQIWVYILPLKYLPLVKNQGITELSLRDFIDKATSAQLSSGSFDTFEVQVGSKLLNGNLIDIKPIVQTRTEQILERVIGRPREWRRFNIRALSVQVVKHVSARIAFGEALADNPGFLDAMERYSLNVIPYTLVFRYFNLGPLRYPLLYLIHLRQRQTLAVATRYVTDLIAERQRKEKEHRLDGDERPVDCIQWSMDQDIPDEQKAPEAVAHRLLHISAALIDAPITSMMNVLADIISYARDEVLDDLRAEIVECLAEFDGAWTEASMAKMKKLDSFFQESFRMTSGLIPLTGWRLIKADCFRFDNDLVLPRGSTIVFPTQCIQLDPNIYPNPDKFDYLRFYRMKEHTQSTDARTGKEVPRHEWLSFGHGRQACPGRFYSIRLLKTILGEMMLRYDIRYAGGDRPRPPMIDLEPILAPDTSVELEFRVRQNVT.

Residues P38 to S58 form a helical membrane-spanning segment. C489 provides a ligand contact to heme.

It belongs to the cytochrome P450 family. The cofactor is heme.

It localises to the membrane. Its pathway is secondary metabolite biosynthesis; terpenoid biosynthesis. In terms of biological role, cytochrome P450 monooxygenase; part of the gene cluster that mediates the biosynthesis of aspergiltriene A, aspergildienes A-D and aspergilols A-D. The bifunctional terpene synthase AuAS converts DMAPP and IPP into sesterterpenes. The C-terminal prenyltransferase (PT) domain of AuAS catalyzes formation of GFPP, whereas the N-terminal terpene cyclase (TC) domain catalyzes the cyclization of GFPP into 5 distinct sesterterpenes: aspergiltriene A, aspergildiene A, aspergildiene B, aspergildiene C and aspergildiene D. The cytochrome P450 monooxygenase AP450 then hydroxylates the aspergildienes A, B, C and D to yield the corresponding sesterterpene alcohols, aspergilols A-D. In Aspergillus ustus, this protein is Aspergilol synthase AuAP450.